The chain runs to 156 residues: Small ribosomal subunit protein bS16 (156 aa).

The span at 124–135 (AAKAAEAETPAE) shows a compositional bias: low complexity. The disordered stretch occupies residues 124–156 (AAKAAEAETPAEVQHDDEKVELADVEESAPESV). Residues 136-145 (VQHDDEKVEL) are compositionally biased toward basic and acidic residues. The segment covering 146 to 156 (ADVEESAPESV) has biased composition (acidic residues).

Belongs to the bacterial ribosomal protein bS16 family.

This chain is Small ribosomal subunit protein bS16, found in Bifidobacterium animalis subsp. lactis (strain AD011).